A 127-amino-acid polypeptide reads, in one-letter code: Glycine cleavage system H protein (127 aa).

A Lipoyl-binding domain is found at 24-105; the sequence is TLTIGITDLA…AYDAWLFKIK (82 aa). Residue Lys-65 is modified to N6-lipoyllysine.

It belongs to the GcvH family. In terms of assembly, the glycine cleavage system is composed of four proteins: P, T, L and H. The cofactor is (R)-lipoate.

Functionally, the glycine cleavage system catalyzes the degradation of glycine. The H protein shuttles the methylamine group of glycine from the P protein to the T protein. This chain is Glycine cleavage system H protein, found in Ralstonia nicotianae (strain ATCC BAA-1114 / GMI1000) (Ralstonia solanacearum).